Consider the following 859-residue polypeptide: Magnesium transporter ALR1 (859 aa).

Low complexity predominate over residues 1–20 (MSSSSSSSESSPNLSRSNSL). 2 disordered regions span residues 1-281 (MSSS…MPPQ) and 330-399 (TSST…NIPS). The residue at position 2 (Ser2) is an N-acetylserine. Basic and acidic residues-rich tracts occupy residues 28 to 42 (KTED…RQHP) and 55 to 73 (KNKE…EQKS). Residue Tyr77 is modified to Phosphotyrosine. The residue at position 85 (Ser85) is a Phosphoserine. Residues 144–154 (PPKDVGVKRDY) show a composition bias toward basic and acidic residues. Residues 157-176 (SSSTASSGNKSKLSASSSAS) show a composition bias toward low complexity. Phosphoserine occurs at positions 185 and 188. Basic and acidic residues predominate over residues 193-203 (IPHESKSDTHS). Residues 213-235 (YSTTSAHSSINPAVLLTKSTSQK) show a composition bias toward polar residues. Ser220, Ser221, and Ser236 each carry phosphoserine. Phosphothreonine is present on Thr242. A compositionally biased stretch (polar residues) spans 252–265 (TRASFDSDVSQASR). Positions 330-339 (TSSTSTSGSS) are enriched in low complexity. Residues 353-375 (EKSESTNETEIHEKKEDEHEKIK) show a composition bias toward basic and acidic residues. The next 2 helical transmembrane spans lie at 744 to 764 (TMIG…GMNV) and 773 to 793 (IAWW…GWFL). The interval 830–859 (FNDRSKNINVRAGPSNKSVASLPSRYSRYD) is disordered. Position 850 is a phosphoserine (Ser850).

Belongs to the CorA metal ion transporter (MIT) (TC 1.A.35) family.

The protein localises to the cell membrane. In terms of biological role, plasma membrane magnesium transporter. The sequence is that of Magnesium transporter ALR1 (ALR1) from Saccharomyces cerevisiae (strain ATCC 204508 / S288c) (Baker's yeast).